A 274-amino-acid polypeptide reads, in one-letter code: uncharacterized protein (274 aa).

A signal peptide spans Met-1–Ala-21. Residues Thr-249–Phe-266 traverse the membrane as a helical segment.

The protein localises to the membrane. This is an uncharacterized protein from Archaeoglobus fulgidus (strain ATCC 49558 / DSM 4304 / JCM 9628 / NBRC 100126 / VC-16).